The following is a 208-amino-acid chain: High frequency lysogenization protein HflD homolog (208 aa).

This sequence belongs to the HflD family.

The protein localises to the cytoplasm. It localises to the cell inner membrane. The polypeptide is High frequency lysogenization protein HflD homolog (Pseudomonas putida (strain ATCC 700007 / DSM 6899 / JCM 31910 / BCRC 17059 / LMG 24140 / F1)).